Here is a 623-residue protein sequence, read N- to C-terminus: Activator of C kinase protein 1 (623 aa).

Residues 141–230 (KESLGSPAVQ…GSSGGEDKLS (90 aa)) are disordered. Positions 152 to 161 (ASISSGNRIS) are enriched in polar residues. A compositionally biased stretch (basic and acidic residues) spans 176-193 (SESRILQEKVYRTEEKAP). Glycyl lysine isopeptide (Lys-Gly) (interchain with G-Cter in ubiquitin) cross-links involve residues Lys184 and Lys191. Residues 206 to 215 (KINQPPTGSA) are compositionally biased toward polar residues. 4 Sel1-like repeats span residues 318–361 (PPAM…KLNN), 408–444 (SACM…QKGD), 495–531 (PLAQ…AAQP), and 576–611 (ARTE…RMGF).

The sequence is that of Activator of C kinase protein 1 (ACK1) from Saccharomyces cerevisiae (strain ATCC 204508 / S288c) (Baker's yeast).